The chain runs to 278 residues: tRNA (guanine-N(7)-)-methyltransferase (278 aa).

Positions 1-42 (MRHDGPMHVQPGVGLQSDTSSSTGTGSGPADEPEAEKSAWGY) are disordered. Residues Glu106, Glu131, Asn160, and Asp183 each coordinate S-adenosyl-L-methionine. Asp183 is a catalytic residue. Residues Lys187, Asp219, and 256-259 (TKYE) each bind substrate.

It belongs to the class I-like SAM-binding methyltransferase superfamily. TrmB family.

It catalyses the reaction guanosine(46) in tRNA + S-adenosyl-L-methionine = N(7)-methylguanosine(46) in tRNA + S-adenosyl-L-homocysteine. It participates in tRNA modification; N(7)-methylguanine-tRNA biosynthesis. Its function is as follows. Catalyzes the formation of N(7)-methylguanine at position 46 (m7G46) in tRNA. This Mycobacterium ulcerans (strain Agy99) protein is tRNA (guanine-N(7)-)-methyltransferase.